The sequence spans 550 residues: ATP synthase subunit alpha (550 aa).

Residue 172–179 coordinates ATP; the sequence is GDRKTGKT. The disordered stretch occupies residues 514–550; that stretch reads EDEQRVNEPPAKPLAGEENRETVTRFRDGTTDRPAES. Residues 528 to 550 show a composition bias toward basic and acidic residues; that stretch reads AGEENRETVTRFRDGTTDRPAES.

This sequence belongs to the ATPase alpha/beta chains family. In terms of assembly, F-type ATPases have 2 components, CF(1) - the catalytic core - and CF(0) - the membrane proton channel. CF(1) has five subunits: alpha(3), beta(3), gamma(1), delta(1), epsilon(1). CF(0) has three main subunits: a(1), b(2) and c(9-12). The alpha and beta chains form an alternating ring which encloses part of the gamma chain. CF(1) is attached to CF(0) by a central stalk formed by the gamma and epsilon chains, while a peripheral stalk is formed by the delta and b chains.

The protein localises to the cell membrane. It catalyses the reaction ATP + H2O + 4 H(+)(in) = ADP + phosphate + 5 H(+)(out). Its function is as follows. Produces ATP from ADP in the presence of a proton gradient across the membrane. The alpha chain is a regulatory subunit. This Salinispora arenicola (strain CNS-205) protein is ATP synthase subunit alpha.